Consider the following 128-residue polypeptide: DELTA-urthionin-Uf1a (128 aa).

The signal sequence occupies residues 1 to 24 (MEGKTVIVSLLLLSIVVGQIQVEA). 3 disulfides stabilise this stretch: cysteine 27–cysteine 64, cysteine 28–cysteine 56, and cysteine 40–cysteine 50. Residues 67 to 128 (LSIPEVTGEA…LCTKNSIETA (62 aa)) constitute a propeptide, acidic domain.

It belongs to the plant thionin (TC 1.C.44) family. Expressed in trichomes, that are stiff epidermal hairs located on the surface of petioles and leaves.

The protein resides in the secreted. In terms of biological role, plant defense protein that causes pain by probable disruption of cell membranes. Shows cytotoxic activity against the neuroblastoma cell line SH-SY5Y and slightly weaker activity against several non-neuronal cell lines. In vivo, intraplantar injection into mice causes several nocifensive responses, along with swelling and redness. The protein is DELTA-urthionin-Uf1a of Urtica ferox (Tree nettle).